A 235-amino-acid polypeptide reads, in one-letter code: Homeobox-leucine zipper protein ATHB-12 (235 aa).

The homeobox DNA-binding region spans 27–86 (KSNNQKRFSEEQIKSLELIFESETRLEPRKKVQVARELGLQPRQVAIWFQNKRARWKTKQ). The interval 87–122 (LEKEYNTLRANYNNLASQFEIMKKEKQSLVSELQRL) is leucine-zipper. Composition is skewed to basic and acidic residues over residues 128 to 138 (RPKEEKHHECC) and 152 to 162 (HNGKSEPEGRL). Positions 128 to 167 (RPKEEKHHECCGDQGLALSSSTESHNGKSEPEGRLDQGSV) are disordered.

This sequence belongs to the HD-ZIP homeobox family. Class I subfamily. As to quaternary structure, interacts with TFIIB1. In terms of tissue distribution, widely expressed.

It localises to the nucleus. Functionally, probable transcription activator that may act as growth regulators in response to water deficit. This chain is Homeobox-leucine zipper protein ATHB-12 (ATHB-12), found in Arabidopsis thaliana (Mouse-ear cress).